Consider the following 212-residue polypeptide: Holliday junction branch migration complex subunit RuvA (212 aa).

Residues 1 to 66 are domain I; that stretch reads MISGLKGTLK…ERGQKLFGFL (66 aa). A domain II region spans residues 67 to 145; that stretch reads TEQDKEFFKV…KLELFLSGTS (79 aa). A flexible linker region spans residues 146–162; the sequence is KEPSISLSSFSETPEEA. The tract at residues 163–212 is domain III; that stretch reads ALSRKREIAILGLVQLGFEEKTASKEVDKILKSSSPTDPGEIIREILKSL.

Belongs to the RuvA family. Homotetramer. Forms an RuvA(8)-RuvB(12)-Holliday junction (HJ) complex. HJ DNA is sandwiched between 2 RuvA tetramers; dsDNA enters through RuvA and exits via RuvB. An RuvB hexamer assembles on each DNA strand where it exits the tetramer. Each RuvB hexamer is contacted by two RuvA subunits (via domain III) on 2 adjacent RuvB subunits; this complex drives branch migration. In the full resolvosome a probable DNA-RuvA(4)-RuvB(12)-RuvC(2) complex forms which resolves the HJ.

It is found in the cytoplasm. The RuvA-RuvB-RuvC complex processes Holliday junction (HJ) DNA during genetic recombination and DNA repair, while the RuvA-RuvB complex plays an important role in the rescue of blocked DNA replication forks via replication fork reversal (RFR). RuvA specifically binds to HJ cruciform DNA, conferring on it an open structure. The RuvB hexamer acts as an ATP-dependent pump, pulling dsDNA into and through the RuvAB complex. HJ branch migration allows RuvC to scan DNA until it finds its consensus sequence, where it cleaves and resolves the cruciform DNA. The protein is Holliday junction branch migration complex subunit RuvA of Leptospira borgpetersenii serovar Hardjo-bovis (strain JB197).